We begin with the raw amino-acid sequence, 631 residues long: Phosphomethylpyrimidine synthase (631 aa).

Substrate is bound by residues Asn239, Met268, Tyr297, His333, 353-355 (SRG), 394-397 (DGLR), and Glu433. His437 contributes to the Zn(2+) binding site. A substrate-binding site is contributed by Tyr460. A Zn(2+)-binding site is contributed by His501. [4Fe-4S] cluster is bound by residues Cys581, Cys584, and Cys589.

It belongs to the ThiC family. Homodimer. Requires [4Fe-4S] cluster as cofactor.

The catalysed reaction is 5-amino-1-(5-phospho-beta-D-ribosyl)imidazole + S-adenosyl-L-methionine = 4-amino-2-methyl-5-(phosphooxymethyl)pyrimidine + CO + 5'-deoxyadenosine + formate + L-methionine + 3 H(+). It participates in cofactor biosynthesis; thiamine diphosphate biosynthesis. Functionally, catalyzes the synthesis of the hydroxymethylpyrimidine phosphate (HMP-P) moiety of thiamine from aminoimidazole ribotide (AIR) in a radical S-adenosyl-L-methionine (SAM)-dependent reaction. This is Phosphomethylpyrimidine synthase from Salmonella gallinarum (strain 287/91 / NCTC 13346).